A 214-amino-acid chain; its full sequence is uncharacterized protein (214 aa).

Y129 serves as the catalytic Proton acceptor.

It belongs to the NAD(P)-dependent epimerase/dehydratase family.

This is an uncharacterized protein from Bacillus subtilis (strain 168).